The primary structure comprises 130 residues: Iron-sulfur cluster insertion protein ErpA (130 aa).

Iron-sulfur cluster contacts are provided by Cys46, Cys116, and Cys118.

Belongs to the HesB/IscA family. In terms of assembly, homodimer. Iron-sulfur cluster serves as cofactor.

Its function is as follows. Required for insertion of 4Fe-4S clusters for at least IspG. This chain is Iron-sulfur cluster insertion protein ErpA, found in Legionella pneumophila subsp. pneumophila (strain Philadelphia 1 / ATCC 33152 / DSM 7513).